Consider the following 1690-residue polypeptide: DNA-directed RNA polymerase subunit beta' (1690 aa).

Residues C63, C65, C78, and C81 each coordinate Zn(2+). Residues D753, D755, and D757 each contribute to the Mg(2+) site. Zn(2+)-binding residues include C1107, C1295, C1302, and C1305.

This sequence belongs to the RNA polymerase beta' chain family. As to quaternary structure, the RNAP catalytic core consists of 2 alpha, 1 beta, 1 beta' and 1 omega subunit. When a sigma factor is associated with the core the holoenzyme is formed, which can initiate transcription. The cofactor is Mg(2+). Requires Zn(2+) as cofactor.

It catalyses the reaction RNA(n) + a ribonucleoside 5'-triphosphate = RNA(n+1) + diphosphate. DNA-dependent RNA polymerase catalyzes the transcription of DNA into RNA using the four ribonucleoside triphosphates as substrates. The polypeptide is DNA-directed RNA polymerase subunit beta' (Thermotoga sp. (strain RQ2)).